The following is an 88-amino-acid chain: Small ribosomal subunit protein uS17 (88 aa).

Belongs to the universal ribosomal protein uS17 family. As to quaternary structure, part of the 30S ribosomal subunit.

Its function is as follows. One of the primary rRNA binding proteins, it binds specifically to the 5'-end of 16S ribosomal RNA. The polypeptide is Small ribosomal subunit protein uS17 (Methylorubrum extorquens (strain PA1) (Methylobacterium extorquens)).